A 264-amino-acid chain; its full sequence is Thymidylate synthase (264 aa).

Arg21 is a binding site for dUMP. His51 lines the (6R)-5,10-methylene-5,6,7,8-tetrahydrofolate pocket. Position 126–127 (126–127) interacts with dUMP; it reads RR. Residue Cys146 is the Nucleophile of the active site. Residues 166–169, Asn177, and 207–209 each bind dUMP; these read RSGD and HIY. Residue Asp169 coordinates (6R)-5,10-methylene-5,6,7,8-tetrahydrofolate. Residue Ala263 coordinates (6R)-5,10-methylene-5,6,7,8-tetrahydrofolate.

Belongs to the thymidylate synthase family. Bacterial-type ThyA subfamily. As to quaternary structure, homodimer.

It is found in the cytoplasm. It carries out the reaction dUMP + (6R)-5,10-methylene-5,6,7,8-tetrahydrofolate = 7,8-dihydrofolate + dTMP. It participates in pyrimidine metabolism; dTTP biosynthesis. Functionally, catalyzes the reductive methylation of 2'-deoxyuridine-5'-monophosphate (dUMP) to 2'-deoxythymidine-5'-monophosphate (dTMP) while utilizing 5,10-methylenetetrahydrofolate (mTHF) as the methyl donor and reductant in the reaction, yielding dihydrofolate (DHF) as a by-product. This enzymatic reaction provides an intracellular de novo source of dTMP, an essential precursor for DNA biosynthesis. In Sinorhizobium medicae (strain WSM419) (Ensifer medicae), this protein is Thymidylate synthase.